Consider the following 641-residue polypeptide: Epithelial sodium channel subunit beta (641 aa).

Residues 1–50 (MHVKKYLLKGLHRLQKGPGYTYKELLVWYCDNTNTHGPKRIICEGPKKKA) lie on the Cytoplasmic side of the membrane. A helical transmembrane segment spans residues 51 to 71 (MWFVLTLLFTSLVCWQWGLFI). Residues 72–533 (KTYLNWEVSV…GGQFGFWMGG (462 aa)) lie on the Extracellular side of the membrane. Intrachain disulfides connect cysteine 98-cysteine 273, cysteine 185-cysteine 190, cysteine 197-cysteine 204, cysteine 250-cysteine 257, cysteine 362-cysteine 449, cysteine 387-cysteine 445, cysteine 391-cysteine 441, cysteine 400-cysteine 427, and cysteine 402-cysteine 416. N-linked (GlcNAc...) asparagine glycosylation is present at asparagine 141. Residue asparagine 379 is glycosylated (N-linked (GlcNAc...) asparagine). A helical membrane pass occupies residues 534-554 (SVLCLIEFGEIIIDFVWITII). At 555–641 (KLVALAKSVR…IESDSEGDAI (87 aa)) the chain is on the cytoplasmic side. The segment at 597–624 (TPGPDVEAYPHEQNPPIPGTPPPNYDSL) is disordered. Residues 609 to 620 (QNPPIPGTPPPN) are compositionally biased toward pro residues. The PY motif; recruits WW domain-containing proteins and is thereby required for ubiquitination and inhibition of the channel by NEDD4 and NEDD4L motif lies at 617 to 621 (PPPNY). Phosphoserine occurs at positions 634 and 636.

It belongs to the amiloride-sensitive sodium channel (TC 1.A.6) family. SCNN1B subfamily. As to quaternary structure, component of the heterotrimeric epithelial sodium channel (ENaC) composed of an alpha/SCNN1A, a beta/SCNN1B and a gamma/SCNN1G subunit. An additional delta/SCNN1D subunit can replace the alpha/SCNN1A subunit to form an alternative channel with specific properties. Interacts with WWP1 (via WW domains). Interacts with WWP2 (via WW domains); inhibits the channel. Interacts with the full-length immature form of PCSK9 (pro-PCSK9). Interacts (N-glycosylated) with BPIFA1; the interaction is direct and inhibits the proteolytic processing of SCNN1A and SCNN1G and the activation of ENaC. Post-translationally, ubiquitinated. Can be ubiquitinated at multiple sites and undergo monoubiquitination and polyubiquitination. Ubiquitination by NEDD4 or NEDD4L inhibits the ENaC channel through endocytosis, intracellular retention and degradation of its individual subunits. However, some studies could not confirm the ubiquitination of this subunit of the ENaC. In terms of processing, phosphorylated on serine and threonine residues. Aldosterone and insulin increase the basal level of phosphorylation. N-glycosylated. N-glycosylation is required for interaction with BPIFA1.

Its subcellular location is the apical cell membrane. It localises to the cytoplasmic vesicle membrane. The enzyme catalyses Na(+)(in) = Na(+)(out). With respect to regulation, originally identified and characterized by its inhibition by the diuretic drug amiloride. Its function is as follows. This is one of the three pore-forming subunits of the heterotrimeric epithelial sodium channel (ENaC), a critical regulator of sodium balance and fluid homeostasis. ENaC operates in epithelial tissues, where it mediates the electrodiffusion of sodium ions from extracellular fluid through the apical membrane of cells, with water following osmotically. It plays a key role in maintaining sodium homeostasis through electrogenic sodium reabsorption in the kidneys. Additionally, ENaC is essential for airway surface liquid homeostasis, which is crucial for proper mucus clearance. The sequence is that of Epithelial sodium channel subunit beta from Bos taurus (Bovine).